Here is a 119-residue protein sequence, read N- to C-terminus: Histone H1B, sperm (119 aa).

Residues Thr8 to Lys77 enclose the H15 domain. The disordered stretch occupies residues Asn76–Asn119. Basic residues predominate over residues Leu80–Asn119.

The protein belongs to the histone H1/H5 family.

It localises to the nucleus. The protein resides in the chromosome. In terms of biological role, histones H1 are necessary for the condensation of nucleosome chains into higher-order structures. The protein is Histone H1B, sperm of Platynereis dumerilii (Dumeril's clam worm).